Consider the following 539-residue polypeptide: Hydroxylamine reductase (539 aa).

Residues Cys-3, Cys-6, Cys-13, and Cys-19 each coordinate [4Fe-4S] cluster. Hybrid [4Fe-2O-2S] cluster contacts are provided by His-240, Glu-264, Cys-308, Cys-395, Cys-423, Cys-448, Glu-482, and Lys-484. Cys-395 carries the post-translational modification Cysteine persulfide.

It belongs to the HCP family. Requires [4Fe-4S] cluster as cofactor. It depends on hybrid [4Fe-2O-2S] cluster as a cofactor.

It localises to the cytoplasm. It catalyses the reaction A + NH4(+) + H2O = hydroxylamine + AH2 + H(+). Its function is as follows. Catalyzes the reduction of hydroxylamine to form NH(3) and H(2)O. This chain is Hydroxylamine reductase, found in Thermodesulfovibrio yellowstonii (strain ATCC 51303 / DSM 11347 / YP87).